A 799-amino-acid chain; its full sequence is Armadillo repeat-containing protein wrm-1 (799 aa).

The span at 1-10 (MEERGPDIEK) shows a compositional bias: basic and acidic residues. The disordered stretch occupies residues 1–60 (MEERGPDIEKYGSQPCTPLSFDPMLPSTSRVATPVRPSSTLSARQAPASPFRAQPQNMEP). Polar residues predominate over residues 26–43 (PSTSRVATPVRPSSTLSA). Residues 454–496 (ESIRRVIQVVGSDDATIAERATGVLRNIGQPNKQNKVIMVRNG) form an ARM repeat.

As to quaternary structure, interacts (independently of ARM repeat) with nhr-25. Component of the beta-catenin-lit-1 complex (also called the lit-1/wrm-1 complex or the wrm-1/lit-1 kinase complex) at least composed of lit-1 and wrm-1. Interacts (via N-terminus) with lit-1; the interaction is direct and activates lit-1 kinase activity which leads to the phosphorylation of pop-1. This promotes pop-1 interaction with par-5 and translocation of pop-1 from the nucleus to the cytoplasm.

The protein localises to the cytoplasm. The protein resides in the cell cortex. It localises to the nucleus. Functionally, antagonistic role in the Wnt signaling pathway that operates in embryogenesis. When located at the cortex it has been shown to inhibit Wnt signaling during asymmetric cell division but when relocated to the nucleus it shows positive regulation. Has a role in blastomere signaling during endoderm specification. Component of the beta-catenin-lit-1 complex which promotes phosphorylation, down-regulation and subcellular relocation of pop-1. Within the complex, activates lit-1-dependent kinase activity. Can substitute for bar-1 indicating functional redundancy. Appears to have a role in centrosome positioning. Involved in the development of distal tip cells (DTC) by regulating the asymmetric distribution of cye-1 and cki-1 between the daughters of Z1.a and Z4.p cells. The polypeptide is Armadillo repeat-containing protein wrm-1 (Caenorhabditis briggsae).